A 533-amino-acid polypeptide reads, in one-letter code: Thromboxane-A synthase (533 aa).

At 1 to 10 (MEVLGLLKFE) the chain is on the cytoplasmic side. The helical transmembrane segment at 11-31 (VSGTVVTVTLSVVLLALLKWY) threads the bilayer. The Lumenal segment spans residues 32-75 (STSAFSRLRKLGIRHPEPSPFVGNLMFFRQGFWESHLELRERYG). The helical transmembrane segment at 76–96 (PLCGYYLGRRMYIVISDPDMI) threads the bilayer. The Cytoplasmic segment spans residues 97-223 (KEVLVENFSN…QRVFAFSTPR (127 aa)). A helical membrane pass occupies residues 224-244 (PLLALILSFPSIMVPLARILP). At 245–335 (NKNRDELNGF…LTVDEIAGQA (91 aa)) the chain is on the lumenal side. Residues 336–356 (FLFLIAGHEITTNTLSFITYL) form a helical membrane-spanning segment. Topologically, residues 357–533 (LATHPECQER…NGVYVKIVSR (177 aa)) are cytoplasmic. A heme-binding site is contributed by Cys479.

This sequence belongs to the cytochrome P450 family. As to quaternary structure, monomer. It depends on heme as a cofactor. As to expression, expressed in bone marrow, spleen, lung, thymus, liver, uterus, and macrophages.

It localises to the endoplasmic reticulum membrane. The enzyme catalyses prostaglandin H2 = thromboxane A2. It carries out the reaction prostaglandin H2 = (12S)-hydroxy-(5Z,8E,10E)-heptadecatrienoate + malonaldehyde. The catalysed reaction is a hydroperoxyeicosatetraenoate = an oxoeicosatetraenoate + H2O. It catalyses the reaction (15S)-hydroperoxy-(5Z,8Z,11Z,13E)-eicosatetraenoate = 15-oxo-(5Z,8Z,11Z,13E)-eicosatetraenoate + H2O. The enzyme catalyses (15S)-hydroperoxy-(5Z,8Z,11Z,13E)-eicosatetraenoate + AH2 = (15S)-hydroxy-(5Z,8Z,11Z,13E)-eicosatetraenoate + A + H2O. Its function is as follows. Catalyzes the conversion of prostaglandin H2 (PGH2) to thromboxane A2 (TXA2), a potent inducer of blood vessel constriction and platelet aggregation. Also cleaves PGH2 to 12-hydroxy-heptadecatrienoicacid (12-HHT) and malondialdehyde, which is known to act as a mediator of DNA damage. 12-HHT and malondialdehyde are formed stoichiometrically in the same amounts as TXA2. Additionally, displays dehydratase activity, toward (15S)-hydroperoxy-(5Z,8Z,11Z,13E)-eicosatetraenoate (15(S)-HPETE) producing 15-KETE and 15-HETE. This chain is Thromboxane-A synthase (Tbxas1), found in Rattus norvegicus (Rat).